The following is a 1687-amino-acid chain: PH domain leucine-rich repeat-containing protein phosphatase 1 (1687 aa).

Met-1 is subject to N-acetylmethionine. Disordered stretches follow at residues 1 to 96 (MEPA…GGGA) and 230 to 406 (AAAP…AAPD). The segment covering 78–96 (APQPAAGGAAPVPAAGGGA) has biased composition (low complexity). Position 286 is a phosphoserine (Ser-286). Residues 314 to 326 (DTESFSLSPSAES) show a composition bias toward polar residues. Phosphoserine is present on Ser-372. The PH domain maps to 492-592 (RIQLSGMYNV…WLRQVSKVAS (101 aa)). 21 LRR repeats span residues 594–615 (RISS…LFYS), 617–638 (DLTH…PAAR), 648–669 (KLKS…VCSI), 671–692 (TLAE…VGDM), 694–715 (NLQT…LESM), 717–739 (QLSY…EKLT), 740–760 (AVDK…QALR), 764–785 (HIKH…EVDF), 788–809 (HVTQ…IFNN), 829–850 (FLKA…PVPN), 851–872 (YLSY…VCES), 874–895 (KLEV…LFCN), 897–918 (SLRK…LERT), 919–940 (SVEV…LLMK), 943–964 (SLRF…TLSE), 969–989 (ILQE…PLLT), 993–1014 (RLKI…KMAK), 1017–1038 (ELEE…IMNC), 1040–1061 (RMHT…MQLP), 1062–1083 (EVKC…ENLP), and 1085–1106 (KLQE…SLEL). Positions 1131-1378 (SHGYTEASGV…DSISAVVVQL (248 aa)) constitute a PPM-type phosphatase domain. Positions 1166, 1167, 1330, and 1369 each coordinate Mn(2+). Disordered regions lie at residues 1414-1465 (DRPS…SSPA) and 1604-1687 (PGGY…DTPL). The span at 1424–1445 (SSSSGMASEISSELSTSEMSSE) shows a compositional bias: low complexity. Residues 1649-1669 (LPPPPQPPQPQPQPQPQPQPQ) show a composition bias toward pro residues. The PDZ-binding signature appears at 1685–1687 (TPL).

In terms of assembly, interacts with the nucleotide free form of K-Ras (KRAS) via its LRR repeats. Interacts with AKT2, AKT3 and PRKCB. Interacts with WDR48 and USP12. Mn(2+) is required as a cofactor. As to expression, isoforms 1 and 2 are expressed in the retina.

Its subcellular location is the cytoplasm. It is found in the membrane. It localises to the nucleus. It carries out the reaction O-phospho-L-seryl-[protein] + H2O = L-seryl-[protein] + phosphate. The catalysed reaction is O-phospho-L-threonyl-[protein] + H2O = L-threonyl-[protein] + phosphate. Insensitive to okadaic acid. Deubiquitination by WDR48-USP12 complex positively regulates PHLPP1 stability. Its function is as follows. Protein phosphatase involved in regulation of Akt and PKC signaling. Mediates dephosphorylation in the C-terminal domain hydrophobic motif of members of the AGC Ser/Thr protein kinase family; specifically acts on 'Ser-473' of AKT2 and AKT3, 'Ser-660' of PRKCB and 'Ser-657' of PRKCA. Isoform 2 seems to have a major role in regulating Akt signaling in hippocampal neurons. Akt regulates the balance between cell survival and apoptosis through a cascade that primarily alters the function of transcription factors that regulate pro- and antiapoptotic genes. Dephosphorylation of 'Ser-473' of Akt triggers apoptosis and suppression of tumor growth. Dephosphorylation of PRKCA and PRKCB leads to their destabilization and degradation. Dephosphorylates STK4 on 'Thr-387' leading to STK4 activation and apoptosis. Dephosphorylates RPS6KB1 and is involved in regulation of cap-dependent translation. Inhibits cancer cell proliferation and may act as a tumor suppressor. Dephosphorylates RAF1 inhibiting its kinase activity. May act as a negative regulator of K-Ras signaling in membrane rafts. Involved in the hippocampus-dependent long-term memory formation. Involved in circadian control by regulating the consolidation of circadian periodicity after resetting. Involved in development and function of regulatory T-cells. The sequence is that of PH domain leucine-rich repeat-containing protein phosphatase 1 (Phlpp1) from Mus musculus (Mouse).